A 266-amino-acid polypeptide reads, in one-letter code: Putative deoxyribonuclease tatdn3 (266 aa).

Zn(2+) is bound by residues His-9, His-11, Glu-103, His-143, His-166, and Asp-214.

It belongs to the metallo-dependent hydrolases superfamily. TatD-type hydrolase family. It depends on Mn(2+) as a cofactor. Requires Ca(2+) as cofactor. Mg(2+) serves as cofactor. Zn(2+) is required as a cofactor.

The protein resides in the nucleus. Its activity is regulated as follows. The 3'-exonuclease activity is sensitive to the metal ion present in the active site, whereas the AP endodeoxyribonuclease activity is observed in a variety of divalent metal cofactors. 3'-exoxonuclease activity is suppressed in the presence of Ca(2+), Zn(2+) and Ni(2+). In terms of biological role, exhibits 3'-exonuclease activities and apurinic/apyrimidinic (AP) endonuclease (in vitro). Show preferential AP endonuclease activity on double-stranded DNA substrates and 3'- exonuclease activity on single-stranded DNA. The protein is Putative deoxyribonuclease tatdn3 (tatdn3) of Danio rerio (Zebrafish).